We begin with the raw amino-acid sequence, 462 residues long: Argininosuccinate lyase (462 aa).

This sequence belongs to the lyase 1 family. Argininosuccinate lyase subfamily.

It is found in the cytoplasm. The enzyme catalyses 2-(N(omega)-L-arginino)succinate = fumarate + L-arginine. Its pathway is amino-acid biosynthesis; L-arginine biosynthesis; L-arginine from L-ornithine and carbamoyl phosphate: step 3/3. The chain is Argininosuccinate lyase from Pelagibacter ubique (strain HTCC1062).